A 265-amino-acid chain; its full sequence is Elongation factor 1-delta (265 aa).

Positions 31-54 are enriched in polar residues; that stretch reads MGSASNKPHNSPQSAASALSNSGD. Disordered stretches follow at residues 31–64 and 118–155; these read MGSA…RVAN and KVQV…DAEA. Acidic residues predominate over residues 130–153; that stretch reads GTGEDDDDDDDIDLFGSDNEEEDA.

It belongs to the EF-1-beta/EF-1-delta family. As to quaternary structure, EF-1 is composed of 4 subunits: alpha, beta, delta, and gamma.

In terms of biological role, EF-1-beta and EF-1-delta stimulate the exchange of GDP bound to EF-1-alpha to GTP. In Xenopus laevis (African clawed frog), this protein is Elongation factor 1-delta (eef1d).